Consider the following 292-residue polypeptide: Ribosomal RNA small subunit methyltransferase I (292 aa).

This sequence belongs to the methyltransferase superfamily. RsmI family.

The protein localises to the cytoplasm. It carries out the reaction cytidine(1402) in 16S rRNA + S-adenosyl-L-methionine = 2'-O-methylcytidine(1402) in 16S rRNA + S-adenosyl-L-homocysteine + H(+). Its function is as follows. Catalyzes the 2'-O-methylation of the ribose of cytidine 1402 (C1402) in 16S rRNA. The protein is Ribosomal RNA small subunit methyltransferase I of Bacillus subtilis (strain 168).